Reading from the N-terminus, the 192-residue chain is 7-methyl-GTP pyrophosphatase (192 aa).

Aspartate 69 (proton acceptor) is an active-site residue.

Belongs to the Maf family. YceF subfamily. A divalent metal cation is required as a cofactor.

It localises to the cytoplasm. It carries out the reaction N(7)-methyl-GTP + H2O = N(7)-methyl-GMP + diphosphate + H(+). In terms of biological role, nucleoside triphosphate pyrophosphatase that hydrolyzes 7-methyl-GTP (m(7)GTP). May have a dual role in cell division arrest and in preventing the incorporation of modified nucleotides into cellular nucleic acids. This chain is 7-methyl-GTP pyrophosphatase, found in Pseudomonas fluorescens (strain Pf0-1).